Consider the following 101-residue polypeptide: Small ubiquitin-related modifier 1 (101 aa).

Ser-2 is modified (N-acetylserine). Ser-2 bears the Phosphoserine mark. Lys-7 participates in a covalent cross-link: Glycyl lysine isopeptide (Lys-Gly) (interchain with G-Cter in SUMO1); alternate. Lys-7 participates in a covalent cross-link: Glycyl lysine isopeptide (Lys-Gly) (interchain with G-Cter in SUMO2); alternate. Ser-9 bears the Phosphoserine mark. Residues Lys-16, Lys-17, and Lys-23 each participate in a glycyl lysine isopeptide (Lys-Gly) (interchain with G-Cter in SUMO2) cross-link. The tract at residues 16 to 25 is (Microbial infection) Interaction with Tula hantavirus; it reads KKEGEYIKLK. A Ubiquitin-like domain is found at 20-97; the sequence is EYIKLKVIGQ…IEVYQEQTGG (78 aa). Residue Lys-25 forms a Glycyl lysine isopeptide (Lys-Gly) (interchain with G-Cter in SUMO1) linkage. Residue Ser-32 is modified to Phosphoserine. Residues Lys-37, Lys-39, Lys-45, and Lys-46 each participate in a glycyl lysine isopeptide (Lys-Gly) (interchain with G-Cter in SUMO2) cross-link. The interval 37–40 is (Microbial infection) Interaction with Tula hantavirus; that stretch reads KVKM. Gly-97 is covalently cross-linked (Glycyl lysine isopeptide (Gly-Lys) (interchain with K-? in acceptor proteins)). A propeptide spanning residues 98–101 is cleaved from the precursor; sequence HSTV.

This sequence belongs to the ubiquitin family. SUMO subfamily. As to quaternary structure, covalently attached to KCNB1; UBE2I increases cross-linking with KCNB1 and PIAS1 decreases cross-links with KCNB1. Interacts with SAE2, RANBP2, PIAS1 and PIAS2. Interacts with PRKN. Covalently attached to a number of proteins such as IKFZ1, PML, RANGAP1, HIPK2, SP100, p53, p73-alpha, MDM2, JUN, DNMT3B and TDG. Also interacts with HIF1A, HIPK2, HIPK3, CHD3, EXOSC9, RAD51 and RAD52. Interacts with USP25 (via ts SIM domain); the interaction weakly sumoylates USP25. Interacts with SIMC1, CASP8AP2, RNF111 and SOBP (via SIM domains). Interacts with BHLHE40/DEC1. Interacts with RWDD3. Interacts with UBE2I/UBC9 and this interaction is enhanced in the presence of RWDD3. Interacts with MTA1. Interacts with SENP2. Interacts with HINT1. In terms of assembly, (Microbial infection) Interacts with Epstein-barr virus BGLF4. (Microbial infection) Interacts (via N-terminus) with Tula hantavirus nucleoprotein. As to quaternary structure, (Microbial infection) Interacts (via N-terminus) with Hantaan hantavirus nucleoprotein. Cleavage of precursor form by SENP1 or SENP2 is necessary for function. In terms of processing, polymeric SUMO1 chains undergo polyubiquitination by RNF4.

It is found in the nucleus membrane. The protein localises to the nucleus speckle. Its subcellular location is the cytoplasm. It localises to the nucleus. The protein resides in the PML body. It is found in the cell membrane. Its function is as follows. Ubiquitin-like protein that can be covalently attached to proteins as a monomer or a lysine-linked polymer. Covalent attachment via an isopeptide bond to its substrates requires prior activation by the E1 complex SAE1-SAE2 and linkage to the E2 enzyme UBE2I, and can be promoted by E3 ligases such as PIAS1-4, RANBP2 or CBX4. This post-translational modification on lysine residues of proteins plays a crucial role in a number of cellular processes such as nuclear transport, DNA replication and repair, mitosis and signal transduction. Involved for instance in targeting RANGAP1 to the nuclear pore complex protein RANBP2. Covalently attached to the voltage-gated potassium channel KCNB1; this modulates the gating characteristics of KCNB1. Polymeric SUMO1 chains are also susceptible to polyubiquitination which functions as a signal for proteasomal degradation of modified proteins. May also regulate a network of genes involved in palate development. Covalently attached to ZFHX3. This Homo sapiens (Human) protein is Small ubiquitin-related modifier 1 (SUMO1).